We begin with the raw amino-acid sequence, 231 residues long: Ribonuclease P protein component 3 (231 aa).

This sequence belongs to the eukaryotic/archaeal RNase P protein component 3 family. Consists of a catalytic RNA component and at least 4-5 protein subunits.

The protein localises to the cytoplasm. The enzyme catalyses Endonucleolytic cleavage of RNA, removing 5'-extranucleotides from tRNA precursor.. Its function is as follows. Part of ribonuclease P, a protein complex that generates mature tRNA molecules by cleaving their 5'-ends. The protein is Ribonuclease P protein component 3 of Methanococcus vannielii (strain ATCC 35089 / DSM 1224 / JCM 13029 / OCM 148 / SB).